Here is a 392-residue protein sequence, read N- to C-terminus: Formate-dependent phosphoribosylglycinamide formyltransferase (392 aa).

Residues 22-23 (EL) and Glu-82 each bind N(1)-(5-phospho-beta-D-ribosyl)glycinamide. ATP contacts are provided by residues Arg-114, Lys-155, 160–165 (SSGKGQ), 195–198 (EGLV), and Glu-203. Residues 119–308 (RLAAETLSLP…EFALHVRAFL (190 aa)) form the ATP-grasp domain. Mg(2+)-binding residues include Glu-267 and Glu-279. N(1)-(5-phospho-beta-D-ribosyl)glycinamide-binding positions include Asp-286, Lys-355, and 362-363 (RR).

This sequence belongs to the PurK/PurT family. Homodimer.

It carries out the reaction N(1)-(5-phospho-beta-D-ribosyl)glycinamide + formate + ATP = N(2)-formyl-N(1)-(5-phospho-beta-D-ribosyl)glycinamide + ADP + phosphate + H(+). It participates in purine metabolism; IMP biosynthesis via de novo pathway; N(2)-formyl-N(1)-(5-phospho-D-ribosyl)glycinamide from N(1)-(5-phospho-D-ribosyl)glycinamide (formate route): step 1/1. In terms of biological role, involved in the de novo purine biosynthesis. Catalyzes the transfer of formate to 5-phospho-ribosyl-glycinamide (GAR), producing 5-phospho-ribosyl-N-formylglycinamide (FGAR). Formate is provided by PurU via hydrolysis of 10-formyl-tetrahydrofolate. The sequence is that of Formate-dependent phosphoribosylglycinamide formyltransferase from Sodalis glossinidius (strain morsitans).